Reading from the N-terminus, the 434-residue chain is Trigger factor 2 (434 aa).

The PPIase FKBP-type domain maps to 164-247 (GDTVTVDYDC…VKKVERIEIL (84 aa)).

Belongs to the FKBP-type PPIase family. Tig subfamily.

It localises to the cytoplasm. It catalyses the reaction [protein]-peptidylproline (omega=180) = [protein]-peptidylproline (omega=0). Involved in protein export. Acts as a chaperone by maintaining the newly synthesized protein in an open conformation. Functions as a peptidyl-prolyl cis-trans isomerase. This chain is Trigger factor 2, found in Desulfitobacterium hafniense (strain Y51).